The sequence spans 78 residues: Large ribosomal subunit protein bL28 (78 aa).

The tract at residues 1–22 (MSRVCQVTGKRPMSGNNRSHAM) is disordered.

It belongs to the bacterial ribosomal protein bL28 family.

In Yersinia pseudotuberculosis serotype O:1b (strain IP 31758), this protein is Large ribosomal subunit protein bL28.